The primary structure comprises 430 residues: Resistance to inhibitors of cholinesterase protein 19 (430 aa).

Residues 56 to 260 (ASDNELDTCL…TSRAFETLAE (205 aa)) form the AH domain. A disordered region spans residues 279-342 (GTKPERERKS…SPLIEDVDDE (64 aa)). Residues 281-294 (KPERERKSEKEESA) are compositionally biased toward basic and acidic residues.

In terms of assembly, interacts with the GTPase activator protein tbc-8; the interaction is direct and may be required for the activation of rab-2 and dense vesicle maturation in cholinergic motoneurons. Interacts with rund-1. As to expression, expressed in all neurons. Highly expressed in m2 pharyngeal neurons and some pharyngeal interneurons. Also expressed in the excretory canal and the gland cells located just below the nerve ring in the head.

It localises to the cytoplasm. It is found in the cytoplasmic vesicle membrane. Functionally, may be involved in neurotransmitter secretion. In association with the GTPase activator protein tbc-8 activates rab-2 during dense core vesicle maturation in cholinergic motoneurons. This Caenorhabditis elegans protein is Resistance to inhibitors of cholinesterase protein 19.